Reading from the N-terminus, the 475-residue chain is MLEDFLKVMPLMTASGISILLILVEAATKNARITRLFAILGFLLVFLSLPFSPSEPDFAFSNMLQSGGFFTYTATVFSIGGLLITLISDKYLEMEDAHHGEYYIILFMAVVGMMLMSAAANLTILFIGLELMSIALYVLAGIMRDDQRSNEAAIKYFLLGAFASGIFLYGIALIYGATGTLYIPQISDHLAKNGFDTLFLSGIALLMIGLLFKVAAVPFHQWSPDVYEGSPTVATAFMATGAKAAALSSMILVGISIAPILETFTAWPTAIAMIATLTMFFGNIAALIQTNLKRMFAYSSIAHAGYMLIGIATGTDSGYAGVLYYIFLYTLMNIGAFGIIILVEQKHQFSELADYEGFFSRAPLLAFLMAMFMFSLAGIPPFGGFIAKYNVFSAAVQADMTWLAVAGVIASAVSVSYYLRVVIAMFMKDTKKQKLNPDPTATATIALVAFLVLLFGIYPSLLIEYTQHALAFAMK.

Transmembrane regions (helical) follow at residues 8–28 (VMPL…EAAT), 36–56 (LFAI…PSEP), 67–87 (GGFF…ITLI), 100–120 (GEYY…SAAA), 122–142 (LTIL…LAGI), 157–177 (FLLG…IYGA), 199–219 (FLSG…AVPF), 244–264 (AAAL…LETF), 268–288 (PTAI…AALI), 295–315 (MFAY…ATGT), 322–342 (VLYY…IIIL), 366–386 (AFLM…GGFI), 403–423 (LAVA…RVVI), and 443–463 (ATIA…SLLI).

It belongs to the complex I subunit 2 family. In terms of assembly, NDH-1 is composed of 14 different subunits. Subunits NuoA, H, J, K, L, M, N constitute the membrane sector of the complex.

The protein localises to the cell inner membrane. It catalyses the reaction a quinone + NADH + 5 H(+)(in) = a quinol + NAD(+) + 4 H(+)(out). NDH-1 shuttles electrons from NADH, via FMN and iron-sulfur (Fe-S) centers, to quinones in the respiratory chain. The immediate electron acceptor for the enzyme in this species is believed to be a menaquinone. Couples the redox reaction to proton translocation (for every two electrons transferred, four hydrogen ions are translocated across the cytoplasmic membrane), and thus conserves the redox energy in a proton gradient. This Chloroherpeton thalassium (strain ATCC 35110 / GB-78) protein is NADH-quinone oxidoreductase subunit N 1.